Here is a 792-residue protein sequence, read N- to C-terminus: E3 UFM1-protein ligase 1 (792 aa).

An N-acetylalanine modification is found at Ala2. The tract at residues 2–200 (ADAWEEIRRL…RGLFSAITRP (199 aa)) is mediates interaction with DDRGK1. Positions 2–212 (ADAWEEIRRL…VNSLISRYGF (211 aa)) are required for E3 UFM1-protein ligase activity. An involved in CDK5RAP3-binding region spans residues 121–250 (DRLAEEVNDK…KAVFIPDIYS (130 aa)). The segment at 200–400 (PTAVNSLISR…NPVHLITEED (201 aa)) is mediates interaction with TRIP4. The interval 412-471 (TSKKDKKDERRRKATEGSGSVRGGGGSNAREYKIKKTKKKGRKDDDSDDESSHTGKKKPE) is disordered. Arg433 is subject to Omega-N-methylarginine. Residues 453–471 (RKDDDSDDESSHTGKKKPE) are compositionally biased toward basic and acidic residues. Position 458 is a phosphoserine (Ser458). Residues 488 to 682 (LQDAPEEFIS…QLKVTEDPAL (195 aa)) form a mediates interaction with CDK5RAP3 region. Thr534 carries the phosphothreonine modification. The residue at position 752 (Ser752) is a Phosphoserine.

The protein belongs to the UFL1 family. Catalytic component of the UFM1 ribosome E3 ligase (UREL) complex, composed of UFL1, DDRGK1 and CDK5RAP3. Interacts with E2-like enzyme UFC1. Interacts with RELA. Interacts with NBN; promoting recruitment to double-strand breaks following DNA damage. Interacts (when phosphorylated) with YWHAG/14-3-3-gamma; sequestering UFL1 and preventing its association with PDCD1/PD-1 substrate. In terms of processing, ubiquitinated, leading to its degradation by the proteasome. Interaction with CDK5RAP3 protects both proteins against ubiquitination and degradation via the proteasome. Phosphorylation at Thr-534 by AMPK promotes its interaction with YWHAG/14-3-3-gamma, thereby preventing UFL1 association with PDCD1/PD-1 substrate.

Its subcellular location is the endoplasmic reticulum membrane. It localises to the cytoplasm. The protein resides in the cytosol. It is found in the nucleus. The protein localises to the chromosome. Its function is as follows. E3 protein ligase that mediates ufmylation, the covalent attachment of the ubiquitin-like modifier UFM1 to lysine residues on target proteins, and which plays a key role in various processes, such as ribosome recycling, response to DNA damage, interferon response or reticulophagy (also called ER-phagy). Catalyzes ufmylation of many protein, such as CD274/PD-L1, CDK5RAP3, CYB5R3, DDRGK1, EIF6, histone H4, MRE11, P4HB, PDCD1/PD-1, TRIP4, RPN1, RPS20/uS10, RPL10/uL16, RPL26/uL24, SYVN1/HRD1 and TP53/p53. As part of the UREL complex, plays a key role in ribosome recycling by catalyzing mono-ufmylation of RPL26/uL24 subunit of the 60S ribosome. Ufmylation of RPL26/uL24 occurs on free 60S ribosomes following ribosome dissociation: it weakens the junction between post-termination 60S subunits and SEC61 translocons, promoting release and recycling of the large ribosomal subunit from the endoplasmic reticulum membrane. Ufmylation of RPL26/uL24 and subsequent 60S ribosome recycling either take place after normal termination of translation or after ribosome stalling during cotranslational translocation at the endoplasmic reticulum. Involved in reticulophagy in response to endoplasmic reticulum stress by mediating ufmylation of proteins such as CYB5R3 and RPN1, thereby promoting lysosomal degradation of ufmylated proteins. Ufmylation in response to endoplasmic reticulum stress is essential for processes such as hematopoiesis, blood vessel morphogenesis or inflammatory response. Regulates inflammation in response to endoplasmic reticulum stress by promoting reticulophagy, leading to inhibit the activity of the NF-kappa-B transcription factor. Mediates ufmylation of DDRGK1 and CDK5RAP3; the role of these modifications is however unclear: as both DDRGK1 and CDK5RAP3 act as substrate adapters for ufmylation, it is uncertain whether ufmylation of these proteins is, a collateral effect or is required for ufmylation. Acts as a negative regulator of T-cell activation by mediating ufmylation and stabilization of PDCD1/PD-1. Also involved in the response to DNA damage: recruited to double-strand break sites following DNA damage and mediates monoufmylation of histone H4 and ufmylation of MRE11. Mediates ufmylation of TP53/p53, promoting its stability. Catalyzes ufmylation of TRIP4, thereby playing a role in nuclear receptor-mediated transcription. Required for hematopoietic stem cell function and hematopoiesis. This chain is E3 UFM1-protein ligase 1, found in Bos taurus (Bovine).